The sequence spans 171 residues: 3-hydroxydecanoyl-[acyl-carrier-protein] dehydratase (171 aa).

The active site involves His-70.

The protein belongs to the thioester dehydratase family. FabA subfamily. As to quaternary structure, homodimer.

It localises to the cytoplasm. The catalysed reaction is a (3R)-hydroxyacyl-[ACP] = a (2E)-enoyl-[ACP] + H2O. It catalyses the reaction (3R)-hydroxydecanoyl-[ACP] = (2E)-decenoyl-[ACP] + H2O. It carries out the reaction (2E)-decenoyl-[ACP] = (3Z)-decenoyl-[ACP]. It functions in the pathway lipid metabolism; fatty acid biosynthesis. Functionally, necessary for the introduction of cis unsaturation into fatty acids. Catalyzes the dehydration of (3R)-3-hydroxydecanoyl-ACP to E-(2)-decenoyl-ACP and then its isomerization to Z-(3)-decenoyl-ACP. Can catalyze the dehydratase reaction for beta-hydroxyacyl-ACPs with saturated chain lengths up to 16:0, being most active on intermediate chain length. The protein is 3-hydroxydecanoyl-[acyl-carrier-protein] dehydratase of Pseudomonas putida (strain W619).